Here is a 381-residue protein sequence, read N- to C-terminus: Cobalt-precorrin-5B C(1)-methyltransferase (381 aa).

The protein belongs to the CbiD family.

It catalyses the reaction Co-precorrin-5B + S-adenosyl-L-methionine = Co-precorrin-6A + S-adenosyl-L-homocysteine. It functions in the pathway cofactor biosynthesis; adenosylcobalamin biosynthesis; cob(II)yrinate a,c-diamide from sirohydrochlorin (anaerobic route): step 6/10. In terms of biological role, catalyzes the methylation of C-1 in cobalt-precorrin-5B to form cobalt-precorrin-6A. In Prochlorococcus marinus (strain NATL1A), this protein is Cobalt-precorrin-5B C(1)-methyltransferase.